Consider the following 133-residue polypeptide: Small ribosomal subunit protein uS8 (133 aa).

The protein belongs to the universal ribosomal protein uS8 family. As to quaternary structure, part of the 30S ribosomal subunit. Contacts proteins S5 and S12.

In terms of biological role, one of the primary rRNA binding proteins, it binds directly to 16S rRNA central domain where it helps coordinate assembly of the platform of the 30S subunit. The protein is Small ribosomal subunit protein uS8 of Prochlorococcus marinus (strain MIT 9312).